The following is a 236-amino-acid chain: Large ribosomal subunit protein uL1 (236 aa).

It belongs to the universal ribosomal protein uL1 family. In terms of assembly, part of the 50S ribosomal subunit.

In terms of biological role, binds directly to 23S rRNA. The L1 stalk is quite mobile in the ribosome, and is involved in E site tRNA release. Functionally, protein L1 is also a translational repressor protein, it controls the translation of the L11 operon by binding to its mRNA. In Corynebacterium efficiens (strain DSM 44549 / YS-314 / AJ 12310 / JCM 11189 / NBRC 100395), this protein is Large ribosomal subunit protein uL1.